The chain runs to 270 residues: tRNA (guanine-N(1)-)-methyltransferase (270 aa).

S-adenosyl-L-methionine contacts are provided by residues G117 and 137-142; that span reads IGDYVL.

The protein belongs to the RNA methyltransferase TrmD family. In terms of assembly, homodimer.

Its subcellular location is the cytoplasm. The catalysed reaction is guanosine(37) in tRNA + S-adenosyl-L-methionine = N(1)-methylguanosine(37) in tRNA + S-adenosyl-L-homocysteine + H(+). Functionally, specifically methylates guanosine-37 in various tRNAs. The chain is tRNA (guanine-N(1)-)-methyltransferase from Heliobacterium modesticaldum (strain ATCC 51547 / Ice1).